The primary structure comprises 325 residues: Eukaryotic translation initiation factor 3 subunit I (325 aa).

WD repeat units lie at residues 8–47, 50–89, 144–183, 186–225, and 283–324; these read GHERSITQIKYNREGDLLFTVAKDPIVNVWYSVNGERLGT, GHTGAVWCVDADWDTRHVLTGSADNSCRLWDCETGKQLAL, CSDSKITSAVWGPLGEFIIAGHENGELNQFSAKSGEQLSN, EHTKQINDIQTSRDMTMFITASKDNTAKLFDCTSLKHLKT, and GHFG…FEFE.

It belongs to the eIF-3 subunit I family. As to quaternary structure, component of the eukaryotic translation initiation factor 3 (eIF-3) complex, which is composed of 13 subunits: EIF3A, EIF3B, EIF3C, EIF3D, EIF3E, EIF3F, EIF3G, EIF3H, EIF3I, EIF3J, EIF3K, EIF3L and EIF3M.

It is found in the cytoplasm. Functionally, component of the eukaryotic translation initiation factor 3 (eIF-3) complex, which is involved in protein synthesis of a specialized repertoire of mRNAs and, together with other initiation factors, stimulates binding of mRNA and methionyl-tRNAi to the 40S ribosome. The eIF-3 complex specifically targets and initiates translation of a subset of mRNAs involved in cell proliferation. The chain is Eukaryotic translation initiation factor 3 subunit I from Taeniopygia guttata (Zebra finch).